A 323-amino-acid polypeptide reads, in one-letter code: D-alanine--D-alanine ligase (323 aa).

The ATP-grasp domain occupies 105-305 (KQQLVPRGIP…YEDLVEAIVE (201 aa)). 131–188 (PLARPYVLKPVNEGSSVGVAIVTDESNYGNPIRRDAPGPWQEFRELLAEPFIRGRELT) serves as a coordination point for ATP. Positions 256, 272, and 274 each coordinate Mg(2+).

The protein belongs to the D-alanine--D-alanine ligase family. It depends on Mg(2+) as a cofactor. Mn(2+) is required as a cofactor.

Its subcellular location is the cytoplasm. It carries out the reaction 2 D-alanine + ATP = D-alanyl-D-alanine + ADP + phosphate + H(+). The protein operates within cell wall biogenesis; peptidoglycan biosynthesis. Cell wall formation. This chain is D-alanine--D-alanine ligase, found in Erythrobacter litoralis (strain HTCC2594).